The sequence spans 118 residues: D-dopachrome decarboxylase (118 aa).

Pro2 is modified (N-acetylproline).

It belongs to the MIF family. Homotrimer.

It is found in the cytoplasm. The enzyme catalyses D-dopachrome + H(+) = 5,6-dihydroxyindole + CO2. Tautomerization of D-dopachrome with decarboxylation to give 5,6-dihydroxyindole (DHI). In Gallus gallus (Chicken), this protein is D-dopachrome decarboxylase (DDT).